The chain runs to 219 residues: Large ribosomal subunit protein uL1 (219 aa).

The protein belongs to the universal ribosomal protein uL1 family. As to quaternary structure, part of the 50S ribosomal subunit.

In terms of biological role, binds directly to 23S rRNA. Probably involved in E site tRNA release. Functionally, protein L1 is also a translational repressor protein, it controls the translation of its operon by binding to its mRNA. This chain is Large ribosomal subunit protein uL1, found in Pyrococcus abyssi (strain GE5 / Orsay).